Consider the following 241-residue polypeptide: Hybrid peroxiredoxin hyPrx5 (241 aa).

In terms of domain architecture, Thioredoxin spans Ser-3–Gln-167. Cys-49 serves as the catalytic Cysteine sulfenic acid (-SOH) intermediate; for peroxiredoxin activity. The Glutaredoxin domain occupies Glu-170 to Ala-241. A disulfide bond links Cys-180 and Cys-183.

It in the N-terminal section; belongs to the peroxiredoxin family. Prx5 subfamily. This sequence in the C-terminal section; belongs to the glutaredoxin family. In terms of assembly, homotetramer; interconnecting Prx and Grx domains of different monomers.

The catalysed reaction is a hydroperoxide + 2 glutathione = an alcohol + glutathione disulfide + H2O. Thiol-specific peroxidase that catalyzes the reduction of hydrogen peroxide and organic hydroperoxides to water and alcohols, respectively. Plays a role in cell protection against oxidative stress by detoxifying peroxides. In Haemophilus influenzae (strain ATCC 51907 / DSM 11121 / KW20 / Rd), this protein is Hybrid peroxiredoxin hyPrx5 (PGdx).